We begin with the raw amino-acid sequence, 129 residues long: Ribonuclease VapC12 (129 aa).

Residues D5 and D94 each coordinate Mg(2+).

Belongs to the PINc/VapC protein family. Mg(2+) serves as cofactor.

In terms of biological role, toxic component of a type II toxin-antitoxin (TA) system. An RNase. The cognate antitoxin is VapB12. This Mycobacterium tuberculosis (strain CDC 1551 / Oshkosh) protein is Ribonuclease VapC12.